A 92-amino-acid chain; its full sequence is Acyl-CoA-binding domain-containing protein 6 (92 aa).

Positions 3 to 88 (LKEEFEEHAE…VKQLLEVAAS (86 aa)) constitute an ACB domain. An acyl-CoA-binding positions include 30-34 (YGLYK), Lys52, Lys56, and Tyr75.

This sequence belongs to the ACBP family. As to quaternary structure, interacts with PDLP8. In terms of tissue distribution, mostly expressed in seeds, stems, and siliques, and, to a lower extent, in leaves, flowers, and roots (at protein level). Highly expressed in root and shoot phloem companion cells.

Its subcellular location is the cytoplasm. It localises to the cell membrane. In terms of biological role, binds medium- and long-chain acyl-CoA esters with very high affinity. May function as an intracellular carrier of acyl-CoA esters. Confers resistance to cold and freezing. Interacts with phosphatidylcholine and derivatives, but not phosphatidic acid and lysophosphatidylcholine. May be involved in phospholipid metabolism. The polypeptide is Acyl-CoA-binding domain-containing protein 6 (ACBP6) (Arabidopsis thaliana (Mouse-ear cress)).